A 92-amino-acid chain; its full sequence is DNA-binding protein HU (92 aa).

The protein belongs to the bacterial histone-like protein family. In terms of assembly, homodimer.

In terms of biological role, histone-like DNA-binding protein which is capable of wrapping DNA to stabilize it, and thus to prevent its denaturation under extreme environmental conditions. The sequence is that of DNA-binding protein HU (hup) from Buchnera aphidicola subsp. Acyrthosiphon pisum (strain APS) (Acyrthosiphon pisum symbiotic bacterium).